A 310-amino-acid chain; its full sequence is Homoserine kinase (310 aa).

Position 91–101 (91–101) interacts with ATP; the sequence is PIGSGLGSSAC.

This sequence belongs to the GHMP kinase family. Homoserine kinase subfamily.

Its subcellular location is the cytoplasm. It carries out the reaction L-homoserine + ATP = O-phospho-L-homoserine + ADP + H(+). It participates in amino-acid biosynthesis; L-threonine biosynthesis; L-threonine from L-aspartate: step 4/5. Its function is as follows. Catalyzes the ATP-dependent phosphorylation of L-homoserine to L-homoserine phosphate. The protein is Homoserine kinase of Shigella sonnei (strain Ss046).